Reading from the N-terminus, the 228-residue chain is Ribose-5-phosphate isomerase A (228 aa).

Substrate contacts are provided by residues 28-31 (TGST), 84-87 (DGAD), and 97-100 (KGGG). The active-site Proton acceptor is the Glu106. A substrate-binding site is contributed by Lys124.

This sequence belongs to the ribose 5-phosphate isomerase family. Homodimer.

The enzyme catalyses aldehydo-D-ribose 5-phosphate = D-ribulose 5-phosphate. Its pathway is carbohydrate degradation; pentose phosphate pathway; D-ribose 5-phosphate from D-ribulose 5-phosphate (non-oxidative stage): step 1/1. Its function is as follows. Catalyzes the reversible conversion of ribose-5-phosphate to ribulose 5-phosphate. This chain is Ribose-5-phosphate isomerase A, found in Levilactobacillus brevis (strain ATCC 367 / BCRC 12310 / CIP 105137 / JCM 1170 / LMG 11437 / NCIMB 947 / NCTC 947) (Lactobacillus brevis).